Consider the following 256-residue polypeptide: Small ribosomal subunit protein uS2 (256 aa).

It belongs to the universal ribosomal protein uS2 family.

This is Small ribosomal subunit protein uS2 from Brucella melitensis biotype 1 (strain ATCC 23456 / CCUG 17765 / NCTC 10094 / 16M).